The following is a 215-amino-acid chain: Protein-L-isoaspartate O-methyltransferase (215 aa).

The active site involves S62.

This sequence belongs to the methyltransferase superfamily. L-isoaspartyl/D-aspartyl protein methyltransferase family.

Its subcellular location is the cytoplasm. The catalysed reaction is [protein]-L-isoaspartate + S-adenosyl-L-methionine = [protein]-L-isoaspartate alpha-methyl ester + S-adenosyl-L-homocysteine. Functionally, catalyzes the methyl esterification of L-isoaspartyl residues in peptides and proteins that result from spontaneous decomposition of normal L-aspartyl and L-asparaginyl residues. It plays a role in the repair and/or degradation of damaged proteins. The sequence is that of Protein-L-isoaspartate O-methyltransferase from Rhodopseudomonas palustris (strain BisA53).